The following is a 1527-amino-acid chain: MDALCGSGELGSKFWDSNLSVHTENPDLTPCFQNSLLAWVPCIYLWVALPCYLLYLRHHCRGYIILSHLSKLKMVLGVLLWCVSWADLFYSFHGLVHGRAPAPVFFVTPLVVGVTMLLATLLIQYERLQGVQSSGVLIIFWFLCVVCAIVPFRSKILLAKAEGEISDPFRFTTFYIHFALVLSALILACFREKPPFFSAKNVDPNPYPETSAGFLSRLFFWWFTKMAIYGYRHPLEEKDLWSLKEEDRSQMVVQQLLEAWRKQEKQTARHKASAAPGKNASGEDEVLLGARPRPRKPSFLKALLATFGSSFLISACFKLIQDLLSFINPQLLSILIRFISNPMAPSWWGFLVAGLMFLCSMMQSLILQHYYHYIFVTGVKFRTGIMGVIYRKALVITNSVKRASTVGEIVNLMSVDAQRFMDLAPFLNLLWSAPLQIILAIYFLWQNLGPSVLAGVAFMVLLIPLNGAVAVKMRAFQVKQMKLKDSRIKLMSEILNGIKVLKLYAWEPSFLKQVEGIRQGELQLLRTAAYLHTTTTFTWMCSPFLVTLITLWVYVYVDPNNVLDAEKAFVSVSLFNILRLPLNMLPQLISNLTQASVSLKRIQQFLSQEELDPQSVERKTISPGYAITIHSGTFTWAQDLPPTLHSLDIQVPKGALVAVVGPVGCGKSSLVSALLGEMEKLEGKVHMKGSVAYVPQQAWIQNCTLQENVLFGKALNPKRYQQTLEACALLADLEMLPGGDQTEIGEKGINLSGGQRQRVSLARAVYSDADIFLLDDPLSAVDSHVAKHIFDHVIGPEGVLAGKTRVLVTHGISFLPQTDFIIVLADGQVSEMGPYPALLQRNGSFANFLCNYAPDEDQGHLEDSWTALEGAEDKEALLIEDTLSNHTDLTDNDPVTYVVQKQFMRQLSALSSDGEGQGRPVPRRHLGPSEKVQVTEAKADGALTQEEKAAIGTVELSVFWDYAKAVGLCTTLAICLLYVGQSAAAIGANVWLSAWTNDAMADSRQNNTSLRLGVYAALGILQGFLVMLAAMAMAAGGIQAARVLHQALLHNKIRSPQSFFDTTPSGRILNCFSKDIYVVDEVLAPVILMLLNSFFNAISTLVVIMASTPLFTVVILPLAVLYTLVQRFYAATSRQLKRLESVSRSPIYSHFSETVTGASVIRAYNRSRDFEIISDTKVDANQRSCYPYIISNRWLSIGVEFVGNCVVLFAALFAVIGRSSLNPGLVGLSVSYSLQVTFALNWMIRMMSDLESNIVAVERVKEYSKTETEAPWVVEGSRPPEGWPPRGEVEFRNYSVRYRPGLDLVLRDLSLHVHGGEKVGIVGRTGAGKSSMTLCLFRILEAAKGEIRIDGLNVADIGLHDLRSQLTIIPQDPILFSGTLRMNLDPFGSYSEEDIWWALELSHLHTFVSSQPAGLDFQCSEGGENLSVGQRQLVCLARALLRKSRILVLDEATAAIDLETDNLIQATIRTQFDTCTVLTIAHRLNTIMDYTRVLVLDKGVVAEFDSPANLIAARGIFYGMARDAGLA.

At 1 to 32 (MDALCGSGELGSKFWDSNLSVHTENPDLTPCF) the chain is on the extracellular side. Asparagine 18 carries N-linked (GlcNAc...) asparagine glycosylation. Residues 33–53 (QNSLLAWVPCIYLWVALPCYL) traverse the membrane as a helical segment. Topologically, residues 54–73 (LYLRHHCRGYIILSHLSKLK) are cytoplasmic. The chain crosses the membrane as a helical span at residues 74–94 (MVLGVLLWCVSWADLFYSFHG). Topologically, residues 95 to 99 (LVHGR) are extracellular. A helical transmembrane segment spans residues 100-120 (APAPVFFVTPLVVGVTMLLAT). At 121–132 (LLIQYERLQGVQ) the chain is on the cytoplasmic side. Residues 133–153 (SSGVLIIFWFLCVVCAIVPFR) form a helical membrane-spanning segment. Topologically, residues 154–171 (SKILLAKAEGEISDPFRF) are extracellular. The helical transmembrane segment at 172 to 192 (TTFYIHFALVLSALILACFRE) threads the bilayer. The Cytoplasmic segment spans residues 193 to 302 (KPPFFSAKNV…RPRKPSFLKA (110 aa)). A helical membrane pass occupies residues 303-323 (LLATFGSSFLISACFKLIQDL). Positions 311 to 594 (FLISACFKLI…LPQLISNLTQ (284 aa)) constitute an ABC transmembrane type-1 1 domain. The Extracellular segment spans residues 324 to 349 (LSFINPQLLSILIRFISNPMAPSWWG). The helical transmembrane segment at 350–370 (FLVAGLMFLCSMMQSLILQHY) threads the bilayer. The Cytoplasmic portion of the chain corresponds to 371-426 (YHYIFVTGVKFRTGIMGVIYRKALVITNSVKRASTVGEIVNLMSVDAQRFMDLAPF). The chain crosses the membrane as a helical span at residues 427-447 (LNLLWSAPLQIILAIYFLWQN). Topologically, residues 448 to 450 (LGP) are extracellular. The helical transmembrane segment at 451 to 471 (SVLAGVAFMVLLIPLNGAVAV) threads the bilayer. Residues 472–533 (KMRAFQVKQM…LLRTAAYLHT (62 aa)) are Cytoplasmic-facing. The chain crosses the membrane as a helical span at residues 534–554 (TTTFTWMCSPFLVTLITLWVY). At 555–576 (VYVDPNNVLDAEKAFVSVSLFN) the chain is on the extracellular side. A helical transmembrane segment spans residues 577-597 (ILRLPLNMLPQLISNLTQASV). Topologically, residues 598–963 (SLKRIQQFLS…VELSVFWDYA (366 aa)) are cytoplasmic. One can recognise an ABC transporter 1 domain in the interval 629–851 (IHSGTFTWAQ…NGSFANFLCN (223 aa)). 661–668 (GPVGCGKS) contacts ATP. 2 positions are modified to phosphoserine: serine 908 and serine 911. The segment at 910–932 (LSSDGEGQGRPVPRRHLGPSEKV) is disordered. The helical transmembrane segment at 964–984 (KAVGLCTTLAICLLYVGQSAA) threads the bilayer. The region spanning 971-1252 (TLAICLLYVG…MIRMMSDLES (282 aa)) is the ABC transmembrane type-1 2 domain. Residues 985-1021 (AIGANVWLSAWTNDAMADSRQNNTSLRLGVYAALGIL) are Extracellular-facing. Residues asparagine 1006 and asparagine 1007 are each glycosylated (N-linked (GlcNAc...) asparagine). A helical transmembrane segment spans residues 1022-1042 (QGFLVMLAAMAMAAGGIQAAR). The Cytoplasmic segment spans residues 1043–1085 (VLHQALLHNKIRSPQSFFDTTPSGRILNCFSKDIYVVDEVLAP). A helical transmembrane segment spans residues 1086 to 1106 (VILMLLNSFFNAISTLVVIMA). Serine 1107 is a topological domain (extracellular). A helical transmembrane segment spans residues 1108 to 1128 (TPLFTVVILPLAVLYTLVQRF). Residues 1129 to 1199 (YAATSRQLKR…ISNRWLSIGV (71 aa)) are Cytoplasmic-facing. Residues 1200 to 1220 (EFVGNCVVLFAALFAVIGRSS) form a helical membrane-spanning segment. Over 1221–1222 (LN) the chain is Extracellular. A helical membrane pass occupies residues 1223 to 1243 (PGLVGLSVSYSLQVTFALNWM). Residues 1244 to 1527 (IRMMSDLESN…YGMARDAGLA (284 aa)) are Cytoplasmic-facing. The ABC transporter 2 domain maps to 1291–1523 (FRNYSVRYRP…RGIFYGMARD (233 aa)). 1323–1330 (GRTGAGKS) provides a ligand contact to ATP.

The protein belongs to the ABC transporter superfamily. ABCC family. Conjugate transporter (TC 3.A.1.208) subfamily. In terms of tissue distribution, mainly expressed in the liver. Also expressed in small intestine, colon, prostate, testis, brain and at a lower level in the kidney. In testis, localized to peritubular myoid cells, Leydig cells, along the basal membrane of Sertoli cells and moderately in the adluminal compartment of the seminiferous tubules.

It is found in the basolateral cell membrane. The protein resides in the basal cell membrane. It carries out the reaction taurocholate(in) + ATP + H2O = taurocholate(out) + ADP + phosphate + H(+). The enzyme catalyses glycocholate(in) + ATP + H2O = glycocholate(out) + ADP + phosphate + H(+). It catalyses the reaction taurolithocholate 3-sulfate(in) + ATP + H2O = taurolithocholate 3-sulfate(out) + ADP + phosphate + H(+). The catalysed reaction is taurochenodeoxycholate 3-sulfate(in) + ATP + H2O = taurochenodeoxycholate 3-sulfate(out) + ADP + phosphate + H(+). It carries out the reaction an S-substituted glutathione(in) + ATP + H2O = an S-substituted glutathione(out) + ADP + phosphate + H(+). The enzyme catalyses ATP + H2O + xenobioticSide 1 = ADP + phosphate + xenobioticSide 2.. It catalyses the reaction 17beta-estradiol 17-O-(beta-D-glucuronate)(in) + ATP + H2O = 17beta-estradiol 17-O-(beta-D-glucuronate)(out) + ADP + phosphate + H(+). The catalysed reaction is dehydroepiandrosterone 3-sulfate(in) + ATP + H2O = dehydroepiandrosterone 3-sulfate(out) + ADP + phosphate + H(+). It carries out the reaction leukotriene C4(in) + ATP + H2O = leukotriene C4(out) + ADP + phosphate + H(+). The enzyme catalyses (4Z,15Z)-bilirubin IXalpha C8-beta-D-glucuronoside(in) + ATP + H2O = (4Z,15Z)-bilirubin IXalpha C8-beta-D-glucuronoside(out) + ADP + phosphate + H(+). It catalyses the reaction (4Z,15Z)-bilirubin IXalpha C8,C12-beta-D-bisglucuronoside(in) + ATP + H2O = (4Z,15Z)-bilirubin IXalpha C8,C12-beta-D-bisglucuronoside(out) + ADP + phosphate + H(+). ATP-dependent transporter of the ATP-binding cassette (ABC) family that binds and hydrolyzes ATP to enable active transport of various substrates including many drugs, toxicants and endogenous compound across cell membranes. Transports glucuronide conjugates such as bilirubin diglucuronide, estradiol-17-beta-o-glucuronide and GSH conjugates such as leukotriene C4 (LTC4). Transports also various bile salts (taurocholate, glycocholate, taurochenodeoxycholate-3-sulfate, taurolithocholate- 3-sulfate). Does not contribute substantially to bile salt physiology but provides an alternative route for the export of bile acids and glucuronides from cholestatic hepatocytes. May contribute to regulate the transport of organic compounds in testes across the blood-testis-barrier. Can confer resistance to various anticancer drugs, methotrexate, tenoposide and etoposide, by decreasing accumulation of these drugs in cells. The chain is ATP-binding cassette sub-family C member 3 from Homo sapiens (Human).